A 1413-amino-acid polypeptide reads, in one-letter code: DNA-directed RNA polymerase subunit beta' (1413 aa).

Residues cysteine 70, cysteine 72, cysteine 85, and cysteine 88 each coordinate Zn(2+). Mg(2+) is bound by residues aspartate 460, aspartate 462, and aspartate 464. Residues cysteine 819, cysteine 893, cysteine 900, and cysteine 903 each contribute to the Zn(2+) site.

This sequence belongs to the RNA polymerase beta' chain family. In terms of assembly, the RNAP catalytic core consists of 2 alpha, 1 beta, 1 beta' and 1 omega subunit. When a sigma factor is associated with the core the holoenzyme is formed, which can initiate transcription. Requires Mg(2+) as cofactor. It depends on Zn(2+) as a cofactor.

It carries out the reaction RNA(n) + a ribonucleoside 5'-triphosphate = RNA(n+1) + diphosphate. Its function is as follows. DNA-dependent RNA polymerase catalyzes the transcription of DNA into RNA using the four ribonucleoside triphosphates as substrates. The chain is DNA-directed RNA polymerase subunit beta' from Burkholderia multivorans (strain ATCC 17616 / 249).